A 317-amino-acid chain; its full sequence is uncharacterized protein (317 aa).

It belongs to the asfivirus F317L family.

The protein resides in the virion. This is an uncharacterized protein from African swine fever virus (isolate Tick/South Africa/Pretoriuskop Pr4/1996) (ASFV).